Reading from the N-terminus, the 81-residue chain is Cytotoxin 1b (81 aa).

A signal peptide spans 1 to 21 (MKTLLLTLVVVTIVCLDLGYT). 4 cysteine pairs are disulfide-bonded: Cys24/Cys42, Cys35/Cys59, Cys63/Cys74, and Cys75/Cys80.

Belongs to the three-finger toxin family. Short-chain subfamily. Type IA cytotoxin sub-subfamily. Monomer in solution; Homodimer and oligomer in the presence of negatively charged lipids forming a pore with a size ranging between 20 and 30 Angstroms. In terms of tissue distribution, expressed by the venom gland.

The protein localises to the secreted. It localises to the target cell membrane. In terms of biological role, shows cytolytic activity on many different cells by forming pore in lipid membranes. In vivo, increases heart rate or kills the animal by cardiac arrest. In addition, it binds to heparin with high affinity, interacts with Kv channel-interacting protein 1 (KCNIP1) in a calcium-independent manner, and binds to integrin alpha-V/beta-3 (ITGAV/ITGB3) with moderate affinity. This is Cytotoxin 1b from Naja atra (Chinese cobra).